A 467-amino-acid chain; its full sequence is UDP-N-acetylmuramate--L-alanine ligase (467 aa).

114 to 120 contributes to the ATP binding site; sequence GTHGKTT.

The protein belongs to the MurCDEF family.

Its subcellular location is the cytoplasm. The enzyme catalyses UDP-N-acetyl-alpha-D-muramate + L-alanine + ATP = UDP-N-acetyl-alpha-D-muramoyl-L-alanine + ADP + phosphate + H(+). It functions in the pathway cell wall biogenesis; peptidoglycan biosynthesis. Cell wall formation. This chain is UDP-N-acetylmuramate--L-alanine ligase, found in Rhodopseudomonas palustris (strain BisA53).